The sequence spans 62 residues: Large ribosomal subunit protein eL19 (62 aa).

This sequence belongs to the eukaryotic ribosomal protein eL19 family.

This is Large ribosomal subunit protein eL19 (RPL19) from Zea mays (Maize).